We begin with the raw amino-acid sequence, 1158 residues long: Serine/threonine/tyrosine-interacting-like protein 2 (1158 aa).

10 disordered regions span residues methionine 1–asparagine 21, glutamate 280–serine 303, glutamate 315–lysine 337, leucine 360–isoleucine 392, glycine 407–serine 444, serine 492–alanine 527, lysine 559–serine 582, glutamine 597–lysine 622, lysine 873–leucine 915, and serine 940–glutamate 1135. Acidic residues predominate over residues glutamate 8–glutamate 19. Positions asparagine 132–glutamate 280 constitute a Tyrosine-protein phosphatase domain. Polar residues predominate over residues serine 322 to lysine 337. Serine 377 carries the post-translational modification Phosphoserine. Threonine 433 bears the Phosphothreonine mark. Over residues serine 435–serine 444 the composition is skewed to low complexity. Over residues lysine 500–glutamate 517 the composition is skewed to basic and acidic residues. Serine 509 carries the post-translational modification Phosphoserine. The span at valine 600 to leucine 619 shows a compositional bias: basic and acidic residues. The segment covering aspartate 877 to aspartate 890 has biased composition (acidic residues). 2 stretches are compositionally biased toward polar residues: residues arginine 897–serine 914 and serine 952–serine 966. A compositionally biased stretch (low complexity) spans lysine 974–serine 983. Serine 985 carries the post-translational modification Phosphoserine. Positions threonine 990–asparagine 999 are enriched in polar residues. A compositionally biased stretch (low complexity) spans serine 1000–threonine 1012. Position 1036 is a phosphoserine (serine 1036). Basic and acidic residues-rich tracts occupy residues arginine 1044–glutamate 1056, arginine 1064–phenylalanine 1079, and arginine 1094–arginine 1111. Residues arginine 1126–glutamate 1135 are compositionally biased toward acidic residues.

Belongs to the protein-tyrosine phosphatase family. Non-receptor class dual specificity subfamily.

The protein localises to the cytoplasm. It localises to the myofibril. It is found in the sarcomere. In terms of biological role, may be required for myofiber maturation. This Homo sapiens (Human) protein is Serine/threonine/tyrosine-interacting-like protein 2.